The sequence spans 397 residues: 1-deoxy-D-xylulose 5-phosphate reductoisomerase (397 aa).

Residues Thr17, Gly18, Ser19, Ile20, Asn47, and Asn130 each coordinate NADPH. Lys131 is a binding site for 1-deoxy-D-xylulose 5-phosphate. Residue Glu132 participates in NADPH binding. Asp156 contributes to the Mn(2+) binding site. Ser157, Glu158, Ser182, and His205 together coordinate 1-deoxy-D-xylulose 5-phosphate. Residue Glu158 participates in Mn(2+) binding. Gly211 lines the NADPH pocket. Residues Ser218, Asn223, Lys224, and Glu227 each contribute to the 1-deoxy-D-xylulose 5-phosphate site. Mn(2+) is bound at residue Glu227.

It belongs to the DXR family. Mg(2+) is required as a cofactor. It depends on Mn(2+) as a cofactor.

The enzyme catalyses 2-C-methyl-D-erythritol 4-phosphate + NADP(+) = 1-deoxy-D-xylulose 5-phosphate + NADPH + H(+). Its pathway is isoprenoid biosynthesis; isopentenyl diphosphate biosynthesis via DXP pathway; isopentenyl diphosphate from 1-deoxy-D-xylulose 5-phosphate: step 1/6. Functionally, catalyzes the NADPH-dependent rearrangement and reduction of 1-deoxy-D-xylulose-5-phosphate (DXP) to 2-C-methyl-D-erythritol 4-phosphate (MEP). This chain is 1-deoxy-D-xylulose 5-phosphate reductoisomerase, found in Allorhizobium ampelinum (strain ATCC BAA-846 / DSM 112012 / S4) (Agrobacterium vitis (strain S4)).